We begin with the raw amino-acid sequence, 467 residues long: Glutamate--tRNA ligase (467 aa).

Residues 13–23 carry the 'HIGH' region motif; sequence PSPTGYLHVGG. A 'KMSKS' region motif is present at residues 245–249; that stretch reads KLSKR. Lys248 is a binding site for ATP.

The protein belongs to the class-I aminoacyl-tRNA synthetase family. Glutamate--tRNA ligase type 1 subfamily. As to quaternary structure, monomer.

The protein localises to the cytoplasm. It carries out the reaction tRNA(Glu) + L-glutamate + ATP = L-glutamyl-tRNA(Glu) + AMP + diphosphate. Its function is as follows. Catalyzes the attachment of glutamate to tRNA(Glu) in a two-step reaction: glutamate is first activated by ATP to form Glu-AMP and then transferred to the acceptor end of tRNA(Glu). The sequence is that of Glutamate--tRNA ligase from Herminiimonas arsenicoxydans.